We begin with the raw amino-acid sequence, 220 residues long: Deoxyribose-phosphate aldolase 2 (220 aa).

The active-site Proton donor/acceptor is the D89. The active-site Schiff-base intermediate with acetaldehyde is K151. K180 serves as the catalytic Proton donor/acceptor.

This sequence belongs to the DeoC/FbaB aldolase family. DeoC type 1 subfamily.

The protein resides in the cytoplasm. The enzyme catalyses 2-deoxy-D-ribose 5-phosphate = D-glyceraldehyde 3-phosphate + acetaldehyde. Its pathway is carbohydrate degradation; 2-deoxy-D-ribose 1-phosphate degradation; D-glyceraldehyde 3-phosphate and acetaldehyde from 2-deoxy-alpha-D-ribose 1-phosphate: step 2/2. In terms of biological role, catalyzes a reversible aldol reaction between acetaldehyde and D-glyceraldehyde 3-phosphate to generate 2-deoxy-D-ribose 5-phosphate. This Staphylococcus aureus (strain MRSA252) protein is Deoxyribose-phosphate aldolase 2.